Here is a 599-residue protein sequence, read N- to C-terminus: Elongation factor 4 (599 aa).

The tr-type G domain maps to 2–184 (KNIRNFSIIA…RLVRDIPPPQ (183 aa)). Residues 14–19 (DHGKST) and 131–134 (NKID) contribute to the GTP site.

This sequence belongs to the TRAFAC class translation factor GTPase superfamily. Classic translation factor GTPase family. LepA subfamily.

Its subcellular location is the cell inner membrane. The catalysed reaction is GTP + H2O = GDP + phosphate + H(+). Its function is as follows. Required for accurate and efficient protein synthesis under certain stress conditions. May act as a fidelity factor of the translation reaction, by catalyzing a one-codon backward translocation of tRNAs on improperly translocated ribosomes. Back-translocation proceeds from a post-translocation (POST) complex to a pre-translocation (PRE) complex, thus giving elongation factor G a second chance to translocate the tRNAs correctly. Binds to ribosomes in a GTP-dependent manner. In Salmonella paratyphi C (strain RKS4594), this protein is Elongation factor 4.